Reading from the N-terminus, the 98-residue chain is Integration host factor subunit beta (98 aa).

It belongs to the bacterial histone-like protein family. As to quaternary structure, heterodimer of an alpha and a beta chain.

Functionally, this protein is one of the two subunits of integration host factor, a specific DNA-binding protein that functions in genetic recombination as well as in transcriptional and translational control. This Pseudomonas fluorescens (strain Pf0-1) protein is Integration host factor subunit beta.